Consider the following 83-residue polypeptide: Large ribosomal subunit protein eL43 (83 aa).

4 residues coordinate Zn(2+): Cys-38, Cys-41, Cys-56, and Cys-59. The C4-type zinc-finger motif lies at Cys-38–Cys-59.

It belongs to the eukaryotic ribosomal protein eL43 family. Putative zinc-binding subfamily. As to quaternary structure, part of the 50S ribosomal subunit. Zn(2+) serves as cofactor.

Its function is as follows. Binds to the 23S rRNA. The polypeptide is Large ribosomal subunit protein eL43 (Archaeoglobus fulgidus (strain ATCC 49558 / DSM 4304 / JCM 9628 / NBRC 100126 / VC-16)).